A 168-amino-acid chain; its full sequence is Vitelline membrane protein Vm26Ab (168 aa).

The first 23 residues, 1-23 (MAFNFGHLLIAGLVALSAVSSET), serve as a signal peptide directing secretion. Residues 24-42 (IQLQPTQGILIPAPLAENI) constitute a propeptide, removed between stage 11 and 14 of oogenesis. The interval 43-46 (RVSR) is essential for N-terminal propeptide removal. Potential serine protease cleavage site. The tract at residues 52–119 (YGAAPAAPSY…PAYSAPASIP (68 aa)) is 8 X 8 AA approximate repeats of P-[AS]-Y-S-A-P-A-[AS]. Residues 55-58 (APAA) form a 1; half-length repeat. The stretch at 59 to 66 (PSYSAPAA) is repeat 2. A 3; approximate repeat occupies 70-77 (QAYSAPAA). 5 consecutive repeat copies span residues 78–85 (PAYSAPAA), 86–93 (PAYSAPAA), 94–101 (PAYSAPAA), 102–109 (PAYSAPAA), and 110–117 (PAYSAPAS). Positions 117–154 (SIPSPPCPKNYLFSCQPSLQPVPCSAPAQSYGSAGAYS) constitute a VM domain. The propeptide at 155 to 168 (QYVPQYAVPFVREL) is removed between stage 9 and 12 of oogenesis.

The protein belongs to the vitelline membrane protein family. As to quaternary structure, interacts with vml and Vm26Aa; forms part of a disulfide-linked network within the vitelline membrane of stage 10 egg chambers. Proteolytically processed after secretion into the perivitelline space. Undergoes several proteolytic processing steps during formation of the vitelline membrane; an initial processing step removing a C-terminal propeptide occurs between stage 9 and 12 of oogenesis while a second removing a N-terminal propeptide occurs between stage 11 and 14. In terms of processing, becomes part of a disulfide-linked network including other vitelline membrane proteins, including vml and Vm26Aa, during vitelline membrane biogenesis and maturation. Cys-123, Cys-131 and Cys-140 are involved in disulfide network formation, with Cys-131 being the most important. Undergoes both disulfide and non-disulfide cross-linking upon incorporation into the vitelline membrane. In terms of tissue distribution, follicle cells.

Its subcellular location is the secreted. It localises to the extracellular space. It is found in the extracellular matrix. Its function is as follows. Major early eggshell protein secreted by follicle cells into the perivitelline space and incorporated into the vitelline membrane. Involved in vitelline membrane biogenesis; forms a cross-linked network with other vitelline membrane components. This chain is Vitelline membrane protein Vm26Ab, found in Drosophila melanogaster (Fruit fly).